Consider the following 264-residue polypeptide: Proteasome subunit beta type-4 (264 aa).

An N-acetylmethionine modification is found at Met-1. The propeptide occupies 1–45 (MEALLESRSGLWAGGPAPGQFYRIPPTPGSSVDPVSALYGSPITR). A Phosphotyrosine modification is found at Tyr-102.

Belongs to the peptidase T1B family. As to quaternary structure, the 26S proteasome consists of a 20S proteasome core and two 19S regulatory subunits. The 20S proteasome core is a barrel-shaped complex made of 28 subunits that are arranged in four stacked rings. The two outer rings are each formed by seven alpha subunits, and the two inner rings are formed by seven beta subunits. The proteolytic activity is exerted by three beta-subunits PSMB5, PSMB6 and PSMB7. Forms a ternary complex with SMAD1 and OAZ1 before PSMB4 is incorporated into the 20S proteasome. Interacts with PRPF19.

It localises to the cytoplasm. It is found in the nucleus. In terms of biological role, non-catalytic component of the 20S core proteasome complex involved in the proteolytic degradation of most intracellular proteins. This complex plays numerous essential roles within the cell by associating with different regulatory particles. Associated with two 19S regulatory particles, forms the 26S proteasome and thus participates in the ATP-dependent degradation of ubiquitinated proteins. The 26S proteasome plays a key role in the maintenance of protein homeostasis by removing misfolded or damaged proteins that could impair cellular functions, and by removing proteins whose functions are no longer required. Associated with the PA200 or PA28, the 20S proteasome mediates ubiquitin-independent protein degradation. This type of proteolysis is required in several pathways including spermatogenesis (20S-PA200 complex) or generation of a subset of MHC class I-presented antigenic peptides (20S-PA28 complex). SMAD1/OAZ1/PSMB4 complex mediates the degradation of the CREBBP/EP300 repressor SNIP1. This is Proteasome subunit beta type-4 (PSMB4) from Bos taurus (Bovine).